A 135-amino-acid polypeptide reads, in one-letter code: MPTNQQLIRKARQRLESGTKSPALRGCPQRRGVCTRVYTTTPKKPNSALRKVARVRLTSKFEVTAYIPGIGHNLQEHSVVLVRGGRVKDLPGVRYHIVRGALDAVGVKDRKKGRSSALQSIVATRIIATIPYQLF.

Belongs to the universal ribosomal protein uS12 family. As to quaternary structure, part of the 30S ribosomal subunit.

The protein resides in the plastid. The protein localises to the chloroplast. Functionally, with S4 and S5 plays an important role in translational accuracy. Located at the interface of the 30S and 50S subunits. This chain is Small ribosomal subunit protein uS12c (rps12), found in Adiantum capillus-veneris (Maidenhair fern).